The following is a 726-amino-acid chain: E3 SUMO-protein ligase SIZ2 (726 aa).

The 35-residue stretch at Met43 to Leu77 folds into the SAP domain. Residues Thr139–Phe291 form the PINIT domain. An SP-RING-type zinc finger spans residues Asp323–Gln408. Cys354, His356, Cys377, and Cys380 together coordinate Zn(2+). Residues Pro507–Asp533 are disordered. Residues Ser510–Asp533 are compositionally biased toward polar residues.

The protein belongs to the PIAS family. In terms of assembly, interacts with CDC12. Autosumoylated upon ethanol stress.

The protein localises to the nucleus. The protein operates within protein modification; protein sumoylation. In terms of biological role, may act as an E3 ligase mediating SUMO/Smt3 attachment to septins. May be involved in chromosome maintenance. This chain is E3 SUMO-protein ligase SIZ2 (NFI1), found in Saccharomyces cerevisiae (strain ATCC 204508 / S288c) (Baker's yeast).